Consider the following 95-residue polypeptide: Large ribosomal subunit protein bL28 (95 aa).

Belongs to the bacterial ribosomal protein bL28 family.

The sequence is that of Large ribosomal subunit protein bL28 from Zymomonas mobilis subsp. mobilis (strain ATCC 31821 / ZM4 / CP4).